Here is a 247-residue protein sequence, read N- to C-terminus: Cell division protein ZapD (247 aa).

The protein belongs to the ZapD family. As to quaternary structure, interacts with FtsZ.

It is found in the cytoplasm. In terms of biological role, cell division factor that enhances FtsZ-ring assembly. Directly interacts with FtsZ and promotes bundling of FtsZ protofilaments, with a reduction in FtsZ GTPase activity. This Shigella dysenteriae serotype 1 (strain Sd197) protein is Cell division protein ZapD.